Consider the following 199-residue polypeptide: Protein-methionine-sulfoxide reductase heme-binding subunit MsrQ (199 aa).

4 helical membrane passes run 8-28 (IIWL…WLFW), 82-102 (LWCF…ELGI), 116-136 (PYLT…LTST), and 153-173 (VVYL…KVLS).

This sequence belongs to the MsrQ family. As to quaternary structure, heterodimer of a catalytic subunit (MsrP) and a heme-binding subunit (MsrQ). It depends on FMN as a cofactor. Heme b serves as cofactor.

The protein localises to the cell inner membrane. In terms of biological role, part of the MsrPQ system that repairs oxidized periplasmic proteins containing methionine sulfoxide residues (Met-O), using respiratory chain electrons. Thus protects these proteins from oxidative-stress damage caused by reactive species of oxygen and chlorine generated by the host defense mechanisms. MsrPQ is essential for the maintenance of envelope integrity under bleach stress, rescuing a wide series of structurally unrelated periplasmic proteins from methionine oxidation, including the primary periplasmic chaperone SurA and the lipoprotein Pal. MsrQ provides electrons for reduction to the reductase catalytic subunit MsrP, using the quinone pool of the respiratory chain. The sequence is that of Protein-methionine-sulfoxide reductase heme-binding subunit MsrQ from Salmonella arizonae (strain ATCC BAA-731 / CDC346-86 / RSK2980).